Here is a 267-residue protein sequence, read N- to C-terminus: Glutamate racemase (267 aa).

Substrate-binding positions include 9–10 (DS) and 41–42 (YS). Cys-73 (proton donor/acceptor) is an active-site residue. Residue 74–75 (NT) participates in substrate binding. Cys-184 (proton donor/acceptor) is an active-site residue. Substrate is bound at residue 185–186 (TH).

It belongs to the aspartate/glutamate racemases family.

The catalysed reaction is L-glutamate = D-glutamate. It functions in the pathway cell wall biogenesis; peptidoglycan biosynthesis. Functionally, provides the (R)-glutamate required for cell wall biosynthesis. This chain is Glutamate racemase, found in Glaesserella parasuis serovar 5 (strain SH0165) (Haemophilus parasuis).